We begin with the raw amino-acid sequence, 391 residues long: uncharacterized protein (391 aa).

Positions 247–387 (AVIVYATIYS…KIKEFGRKLA (141 aa)) constitute a Flavodoxin-like domain.

This is an uncharacterized protein from Methanocaldococcus jannaschii (strain ATCC 43067 / DSM 2661 / JAL-1 / JCM 10045 / NBRC 100440) (Methanococcus jannaschii).